The chain runs to 317 residues: Pantothenate kinase (317 aa).

Residue 99–106 (GSVSVGKS) coordinates ATP.

The protein belongs to the prokaryotic pantothenate kinase family.

It localises to the cytoplasm. The catalysed reaction is (R)-pantothenate + ATP = (R)-4'-phosphopantothenate + ADP + H(+). It participates in cofactor biosynthesis; coenzyme A biosynthesis; CoA from (R)-pantothenate: step 1/5. The chain is Pantothenate kinase from Histophilus somni (strain 2336) (Haemophilus somnus).